We begin with the raw amino-acid sequence, 315 residues long: DNA-directed RNA polymerase subunit alpha (315 aa).

The tract at residues 1 to 228 is alpha N-terminal domain (alpha-NTD); it reads MLEIEKPIIE…EHFKLFMSLT (228 aa). The interval 245-315 is alpha C-terminal domain (alpha-CTD); the sequence is KEKVLEMTVE…LGLCLKLNDE (71 aa).

The protein belongs to the RNA polymerase alpha chain family. As to quaternary structure, homodimer. The RNAP catalytic core consists of 2 alpha, 1 beta, 1 beta' and 1 omega subunit. When a sigma factor is associated with the core the holoenzyme is formed, which can initiate transcription.

The catalysed reaction is RNA(n) + a ribonucleoside 5'-triphosphate = RNA(n+1) + diphosphate. Functionally, DNA-dependent RNA polymerase catalyzes the transcription of DNA into RNA using the four ribonucleoside triphosphates as substrates. The sequence is that of DNA-directed RNA polymerase subunit alpha from Clostridium botulinum (strain Alaska E43 / Type E3).